Reading from the N-terminus, the 148-residue chain is Putative nickel-responsive regulator (148 aa).

Ni(2+) is bound by residues His-88, His-99, His-101, and Cys-107.

This sequence belongs to the transcriptional regulatory CopG/NikR family. Ni(2+) is required as a cofactor.

Its function is as follows. Transcriptional regulator. The sequence is that of Putative nickel-responsive regulator from Helicobacter acinonychis (strain Sheeba).